The sequence spans 311 residues: MRTEKIDKSIHNASLATPKQAFSQVLSETLKTGIIKSNLLAMAAGLSLALYVTGIPIGEKLPEILFAIFGSAFVIGAAGAFNNIYDRDIDAIMDRTKNRPTVTGRMQPANALVLGISLSLLGLLLLGVASPRAALFGFLGLFLYVVPYTMWSKRRTIYNTEIGSVGGAVPPLIGWAAISGDLVHPAIIGLFVVTVLWQMPHFYAIAIRRYDEYKAAKVPMLPVVKGFKRTFIQTNVYLVVLAASSFFFVSLSWFITIVALVLSLIWLTLSIAGYKRMEPKKWATLMFVFSLNYLTILFTVIIGFSLLSPLF.

A run of 8 helical transmembrane segments spans residues 39–59 (LLAMAAGLSLALYVTGIPIGE), 61–81 (LPEILFAIFGSAFVIGAAGAF), 111–131 (ALVLGISLSLLGLLLLGVASP), 133–153 (AALFGFLGLFLYVVPYTMWSK), 162–182 (IGSVGGAVPPLIGWAAISGDL), 187–207 (IIGLFVVTVLWQMPHFYAIAI), 246–266 (FFFVSLSWFITIVALVLSLIW), and 287–307 (FVFSLNYLTILFTVIIGFSLL).

This sequence belongs to the UbiA prenyltransferase family. Protoheme IX farnesyltransferase subfamily. In terms of assembly, interacts with CtaA.

The protein localises to the cell membrane. It carries out the reaction heme b + (2E,6E)-farnesyl diphosphate + H2O = Fe(II)-heme o + diphosphate. It functions in the pathway porphyrin-containing compound metabolism; heme O biosynthesis; heme O from protoheme: step 1/1. Its function is as follows. Converts heme B (protoheme IX) to heme O by substitution of the vinyl group on carbon 2 of heme B porphyrin ring with a hydroxyethyl farnesyl side group. The chain is Protoheme IX farnesyltransferase from Shouchella clausii (strain KSM-K16) (Alkalihalobacillus clausii).